A 553-amino-acid polypeptide reads, in one-letter code: MLQSSNHHYLRPDYMTAAAAPTAQLDNKSSPLALLAQTCSAIGADTTNPKLLAANIEKSTKQLQHHPKGSSGSGGSGSFGLSQQASMDGSARDKSSPVSSHSSSVSTGSVEQQQLPPAHGSSSSSKPTPTTFKPYEPNNNISNITTAADCGATNLSSNNTSAQQRVKTPKSMTNGGGQRCDSNQSASSQHRESPTAAGSLRRTPTSGLAGGVMQHNGSPGLPPTASTTPGRSNSKESAAMHSPSAAAAAAAAAAQIASSNRLQEAALAAAKEANYVKALHAASQQGSASAAAAAASYYPPGYGSPYSMDLMTASSLMSPHHAMFKASAMNPYLNYARMKGLTEQSMMAATPNVCRDPYCTGCPASPHYINKAAGQPCPAGCPQCEGGGGGGGGSSKSSGSQGGSGGSSSAAAAAAAAAASSYHAQLAALAAASQMPYVCSWIGSDAAYCGKRFGTSDDLFQHLRTHTASVPDAVLSAAAAGGIPPNHPLFQRTYPTPPLSPLSAARYHPYGKPSMLPPSLAPPGMPGLPPHPALAQYFAPYSLYGPRMGSSHP.

Disordered regions lie at residues 59 to 243 (STKQ…MHSP) and 388 to 407 (GGGG…SGGS). Low complexity-rich tracts occupy residues 96 to 110 (SPVS…TGSV) and 121 to 134 (SSSS…TFKP). Polar residues-rich tracts occupy residues 137–146 (PNNNISNITT), 153–173 (TNLS…KSMT), and 224–236 (TAST…NSKE). Residues 287–480 (SASAAAAAAS…PDAVLSAAAA (194 aa)) are self-association. The tract at residues 287–553 (SASAAAAAAS…YGPRMGSSHP (267 aa)) is interaction with noc. The segment covering 388–406 (GGGGGGSSKSSGSQGGSGG) has biased composition (gly residues). The C2H2-type zinc-finger motif lies at 437–466 (YVCSWIGSDAAYCGKRFGTSDDLFQHLRTH).

Belongs to the Elbow/Noc family. As to quaternary structure, self-associates. Interacts with gro and noc.

In terms of biological role, may negatively regulate Notch-induced cell proliferation in the eye-head primordium. May act in leg and wing primordia to negatively regulate body-wall specifying genes and thereby promote appendage formation. Required for tracheal development. The protein is Zinc finger protein Elbow (elB) of Drosophila melanogaster (Fruit fly).